Consider the following 623-residue polypeptide: uncharacterized protein (623 aa).

Residues 24–51 (RALVQKDELAQASQDVEDMRDCYDSLLN) are a coiled coil. Disordered regions lie at residues 148 to 170 (TRQREKGRSKGGKGETFSPQQLQ), 240 to 343 (FSGL…TTPP), 362 to 393 (ALPTPVETTRSPSSTTSPGHKNVGSSNPTKAI), 454 to 531 (SFSG…LGYS), and 585 to 607 (KKLGTPSPPLTPMSLIHPPPQAL). Residues 243–259 (LEDDDGDDEIENNENDG) show a composition bias toward acidic residues. Polar residues predominate over residues 328–343 (VSQSAPLFPENRTTPP). A compositionally biased stretch (low complexity) spans 364–379 (PTPVETTRSPSSTTSP). Residues 384–393 (VGSSNPTKAI) show a composition bias toward polar residues. Residues 484 to 495 (PVSKLPKVSSSP) are compositionally biased toward low complexity. Polar residues predominate over residues 496–506 (TASPTFVSTPK). The span at 590–606 (PSPPLTPMSLIHPPPQA) shows a compositional bias: pro residues.

This is an uncharacterized protein from Arabidopsis thaliana (Mouse-ear cress).